The following is a 209-amino-acid chain: ATP synthase subunit O, mitochondrial (209 aa).

Belongs to the ATPase delta chain family. As to quaternary structure, F-type ATPases have 2 components, CF(1) - the catalytic core - and CF(0) - the membrane proton channel. CF(1) has five subunits: alpha(3), beta(3), gamma(1), delta(1), epsilon(1). CF(0) has three main subunits: a, b and c.

It localises to the mitochondrion. The protein resides in the mitochondrion inner membrane. Its function is as follows. Mitochondrial membrane ATP synthase (F(1)F(0) ATP synthase or Complex V) produces ATP from ADP in the presence of a proton gradient across the membrane which is generated by electron transport complexes of the respiratory chain. F-type ATPases consist of two structural domains, F(1) - containing the extramembraneous catalytic core and F(0) - containing the membrane proton channel, linked together by a central stalk and a peripheral stalk. During catalysis, ATP synthesis in the catalytic domain of F(1) is coupled via a rotary mechanism of the central stalk subunits to proton translocation. Part of the complex F(0) domain and the peripheric stalk, which acts as a stator to hold the catalytic alpha(3)beta(3) subcomplex and subunit a/ATP6 static relative to the rotary elements. In Drosophila melanogaster (Fruit fly), this protein is ATP synthase subunit O, mitochondrial.